The primary structure comprises 491 residues: Glutathione synthetase GSH2 (491 aa).

Arg128 is a binding site for substrate. Glu146 is a binding site for ATP. Residues Glu146 and Asn148 each coordinate Mg(2+). Substrate contacts are provided by residues 150–153 (VSVS), 228–230 (ERN), Gln234, and 285–288 (RTGY). ATP is bound by residues Lys324, 382-391 (KPQREGGGNN), Tyr393, 415-418 (MELI), and Glu442. Mg(2+) is bound at residue Glu386. Arg467 contributes to the substrate binding site. Lys469 and Glu475 together coordinate ATP. 478-479 (VA) contributes to the substrate binding site.

The protein belongs to the eukaryotic GSH synthase family. In terms of assembly, homodimer. Mg(2+) is required as a cofactor.

The enzyme catalyses gamma-L-glutamyl-L-cysteine + glycine + ATP = glutathione + ADP + phosphate + H(+). It functions in the pathway sulfur metabolism; glutathione biosynthesis; glutathione from L-cysteine and L-glutamate: step 2/2. This is Glutathione synthetase GSH2 (GSH2) from Saccharomyces cerevisiae (strain ATCC 204508 / S288c) (Baker's yeast).